Here is a 162-residue protein sequence, read N- to C-terminus: E3 ubiquitin-protein ligase LAP (162 aa).

Topologically, residues 1–78 are cytoplasmic; the sequence is MEGSDNTNTH…RWKCSFMYCN (78 aa). An RING-CH-type zinc finger spans residues 3–61; it reads GSDNTNTHCWICKDEYNVSTNFCNCKNEFKIVHKNCLEEWINFSHNTKCKICNGKYNIK. Zn(2+)-binding residues include Cys-11, Cys-14, Cys-25, Cys-27, His-35, Cys-38, Cys-51, and Cys-54. Residues 79-99 traverse the membrane as a helical segment; that stretch reads VPAICVSLICLLLLPLTILLV. At 100–121 the chain is on the lumenal side; that stretch reads KFNLKSMLENIENRDLIALISA. The chain crosses the membrane as a helical span at residues 122-142; that stretch reads MAYSLPCVVGFITVVHILIAL. Over 143 to 162 the chain is Cytoplasmic; the sequence is YDYYLAAKSDNTTYQVYEYI.

It belongs to the poxviridae LAP protein family.

Its subcellular location is the host membrane. The protein resides in the host Golgi apparatus. It is found in the host trans-Golgi network membrane. The protein localises to the host early endosome membrane. The catalysed reaction is S-ubiquitinyl-[E2 ubiquitin-conjugating enzyme]-L-cysteine + [acceptor protein]-L-lysine = [E2 ubiquitin-conjugating enzyme]-L-cysteine + N(6)-ubiquitinyl-[acceptor protein]-L-lysine.. Functionally, E3 ubiquitin-protein ligase which promotes ubiquitination and subsequent degradation of host MHC-I and CD4 molecules, presumably to prevent lysis of infected cells by cytotoxic T-lymphocytes and NK cell. Binds target molecules through transmembrane interaction. The result of this ubiquitination is the enhancement of the endocytosis of the target chain and the delivery to the lysosome, where it is proteolytically destroyed. In Lumpy skin disease virus (LSDV), this protein is E3 ubiquitin-protein ligase LAP (LW010).